The sequence spans 304 residues: Large ribosomal subunit protein uL18 (304 aa).

The segment at 285–304 (LNALNSSAGADDDDEEEDDE) is disordered. Residues 294-304 (ADDDDEEEDDE) are compositionally biased toward acidic residues.

The protein belongs to the universal ribosomal protein uL18 family. Component of the large ribosomal subunit (LSU).

The protein resides in the cytoplasm. It localises to the nucleus. Functionally, component of the ribosome, a large ribonucleoprotein complex responsible for the synthesis of proteins in the cell. The small ribosomal subunit (SSU) binds messenger RNAs (mRNAs) and translates the encoded message by selecting cognate aminoacyl-transfer RNA (tRNA) molecules. The large subunit (LSU) contains the ribosomal catalytic site termed the peptidyl transferase center (PTC), which catalyzes the formation of peptide bonds, thereby polymerizing the amino acids delivered by tRNAs into a polypeptide chain. The nascent polypeptides leave the ribosome through a tunnel in the LSU and interact with protein factors that function in enzymatic processing, targeting, and the membrane insertion of nascent chains at the exit of the ribosomal tunnel. The sequence is that of Large ribosomal subunit protein uL18 (RPL5A) from Oryza sativa subsp. indica (Rice).